An 860-amino-acid polypeptide reads, in one-letter code: Leucine--tRNA ligase (860 aa).

Positions 42–52 match the 'HIGH' region motif; sequence PYPSGRLHMGH. Residues 619 to 623 carry the 'KMSKS' region motif; sequence KMSKS. An ATP-binding site is contributed by lysine 622.

Belongs to the class-I aminoacyl-tRNA synthetase family.

It localises to the cytoplasm. The catalysed reaction is tRNA(Leu) + L-leucine + ATP = L-leucyl-tRNA(Leu) + AMP + diphosphate. This chain is Leucine--tRNA ligase, found in Yersinia pseudotuberculosis serotype O:3 (strain YPIII).